The sequence spans 243 residues: ATP synthase subunit a (243 aa).

A run of 8 helical transmembrane segments spans residues 29-49 (NASL…YVGL), 54-74 (VIPN…VSTI), 89-109 (VFTI…PLGF), 114-134 (HIAV…FIGF), 141-161 (FLHI…MVLI), 177-197 (LAAN…FVIN), 200-220 (IFLT…EIFV), and 221-241 (AILQ…DAVN).

The protein belongs to the ATPase A chain family. In terms of assembly, F-type ATPases have 2 components, CF(1) - the catalytic core - and CF(0) - the membrane proton channel. CF(1) has five subunits: alpha(3), beta(3), gamma(1), delta(1), epsilon(1). CF(0) has three main subunits: a(1), b(2) and c(9-12). The alpha and beta chains form an alternating ring which encloses part of the gamma chain. CF(1) is attached to CF(0) by a central stalk formed by the gamma and epsilon chains, while a peripheral stalk is formed by the delta and b chains.

Its subcellular location is the cell inner membrane. Its function is as follows. Key component of the proton channel; it plays a direct role in the translocation of protons across the membrane. This is ATP synthase subunit a from Ehrlichia ruminantium (strain Welgevonden).